The sequence spans 318 residues: Acetyl-coenzyme A carboxylase carboxyl transferase subunit alpha (318 aa).

The CoA carboxyltransferase C-terminal domain occupies 38–292; sequence KLEKRLAKLE…NKTITKSLHA (255 aa).

This sequence belongs to the AccA family. Acetyl-CoA carboxylase is a heterohexamer composed of biotin carboxyl carrier protein (AccB), biotin carboxylase (AccC) and two subunits each of ACCase subunit alpha (AccA) and ACCase subunit beta (AccD).

It localises to the cytoplasm. It catalyses the reaction N(6)-carboxybiotinyl-L-lysyl-[protein] + acetyl-CoA = N(6)-biotinyl-L-lysyl-[protein] + malonyl-CoA. It participates in lipid metabolism; malonyl-CoA biosynthesis; malonyl-CoA from acetyl-CoA: step 1/1. In terms of biological role, component of the acetyl coenzyme A carboxylase (ACC) complex. First, biotin carboxylase catalyzes the carboxylation of biotin on its carrier protein (BCCP) and then the CO(2) group is transferred by the carboxyltransferase to acetyl-CoA to form malonyl-CoA. This is Acetyl-coenzyme A carboxylase carboxyl transferase subunit alpha from Listeria monocytogenes serotype 4b (strain CLIP80459).